The chain runs to 510 residues: Probable gamma-aminobutyrate transaminase 3, mitochondrial (510 aa).

The transit peptide at 1-41 directs the protein to the mitochondrion; sequence MICRSLLLLRSNAASKASNIVKHVAATGCLPKYSSEAPARY. Pyridoxal 5'-phosphate is bound at residue 166–167; it reads GS. Tyr199 contributes to the substrate binding site. Pyridoxal 5'-phosphate is bound at residue Asp306. Lys335 contacts substrate. Lys335 carries the post-translational modification N6-(pyridoxal phosphate)lysine.

The protein belongs to the class-III pyridoxal-phosphate-dependent aminotransferase family.

The protein resides in the mitochondrion. It carries out the reaction 4-aminobutanoate + pyruvate = succinate semialdehyde + L-alanine. The catalysed reaction is 4-aminobutanoate + glyoxylate = succinate semialdehyde + glycine. Its function is as follows. Transaminase that degrades gamma-amino butyric acid (GABA). The polypeptide is Probable gamma-aminobutyrate transaminase 3, mitochondrial (Oryza sativa subsp. japonica (Rice)).